The primary structure comprises 447 residues: Protein cortex (447 aa).

WD repeat units follow at residues 108–148 (TYSY…IGHG), 149–188 (FAEY…KIMS), 198–237 (NMNC…ISWR), 281–325 (DSDW…VRDT), 344–380 (GELV…DQWG), and 384–423 (SGLD…NKMK). Positions 384–395 (SGLDRVRTMIFS) match the D-box motif.

Belongs to the WD repeat CORT family.

Its subcellular location is the cytoplasm. In terms of biological role, controls wing pigmentation patterning by regulating scale cell development, thereby playing a key role in mimicry and crypsis. Probably acts as an activator of the anaphase promoting complex/cyclosome (APC/C) that promotes the ubiquitin ligase activity and substrate specificity of the APC/C. This Heliconius melpomene (Postman butterfly) protein is Protein cortex.